We begin with the raw amino-acid sequence, 334 residues long: Large ribosomal subunit protein uL3 (334 aa).

The segment covering 1-10 (MGMKKSRPRR) has biased composition (basic residues). The interval 1-20 (MGMKKSRPRRGSLAFSPRKR) is disordered.

This sequence belongs to the universal ribosomal protein uL3 family. As to quaternary structure, part of the 50S ribosomal subunit. Forms a cluster with proteins L14 and L24e.

Functionally, one of the primary rRNA binding proteins, it binds directly near the 3'-end of the 23S rRNA, where it nucleates assembly of the 50S subunit. In Methanococcus maripaludis (strain C6 / ATCC BAA-1332), this protein is Large ribosomal subunit protein uL3.